The primary structure comprises 365 residues: 3-isopropylmalate dehydrogenase (365 aa).

Position 80-93 (80-93 (GPKWADNTGDQRPE)) interacts with NAD(+). Arginine 100, arginine 110, arginine 138, and aspartate 223 together coordinate substrate. 3 residues coordinate Mg(2+): aspartate 223, aspartate 247, and aspartate 251. 280–292 (GSAPDIAGQDVAN) is an NAD(+) binding site. A disordered region spans residues 337–365 (NEEDASTSAFGREVATRAADSVPQNAPTP).

Belongs to the isocitrate and isopropylmalate dehydrogenases family. LeuB type 1 subfamily. In terms of assembly, homodimer. The cofactor is Mg(2+). It depends on Mn(2+) as a cofactor.

It localises to the cytoplasm. The enzyme catalyses (2R,3S)-3-isopropylmalate + NAD(+) = 4-methyl-2-oxopentanoate + CO2 + NADH. The protein operates within amino-acid biosynthesis; L-leucine biosynthesis; L-leucine from 3-methyl-2-oxobutanoate: step 3/4. Its function is as follows. Catalyzes the oxidation of 3-carboxy-2-hydroxy-4-methylpentanoate (3-isopropylmalate) to 3-carboxy-4-methyl-2-oxopentanoate. The product decarboxylates to 4-methyl-2 oxopentanoate. The sequence is that of 3-isopropylmalate dehydrogenase from Salinibacter ruber (strain DSM 13855 / M31).